Reading from the N-terminus, the 181-residue chain is Adenine phosphoribosyltransferase (181 aa).

This sequence belongs to the purine/pyrimidine phosphoribosyltransferase family. As to quaternary structure, homodimer.

The protein localises to the cytoplasm. The catalysed reaction is AMP + diphosphate = 5-phospho-alpha-D-ribose 1-diphosphate + adenine. It functions in the pathway purine metabolism; AMP biosynthesis via salvage pathway; AMP from adenine: step 1/1. Functionally, catalyzes a salvage reaction resulting in the formation of AMP, that is energically less costly than de novo synthesis. The chain is Adenine phosphoribosyltransferase from Rhodopseudomonas palustris (strain HaA2).